We begin with the raw amino-acid sequence, 143 residues long: Actin-depolymerizing factor 5 (143 aa).

An ADF-H domain is found at 11–143 (GMNVKEECQR…GYDVIRGRAQ (133 aa)).

Belongs to the actin-binding proteins ADF family.

Functionally, actin-depolymerizing protein. Severs actin filaments (F-actin) and binds to actin monomers. The polypeptide is Actin-depolymerizing factor 5 (ADF5) (Oryza sativa subsp. japonica (Rice)).